We begin with the raw amino-acid sequence, 1378 residues long: Macrophage-stimulating protein receptor (1378 aa).

An N-terminal signal peptide occupies residues Met1–Ala23. The Extracellular portion of the chain corresponds to Thr25–Arg960. Residues Arg33–Ile524 form the Sema domain. The N-linked (GlcNAc...) asparagine glycan is linked to Asn91. 7 cysteine pairs are disulfide-bonded: Cys102–Cys105, Cys108–Cys163, Cys136–Cys144, Cys175–Cys178, Cys301–Cys368, Cys386–Cys409, and Cys387–Cys424. 3 N-linked (GlcNAc...) asparagine glycosylation sites follow: Asn391, Asn460, and Asn490. 4 disulfide bridges follow: Cys529-Cys547, Cys535-Cys569, Cys538-Cys554, and Cys550-Cys560. 3 consecutive IPT/TIG domains span residues Pro571–Glu673, Pro686–Lys769, and Pro772–Leu864. 4 N-linked (GlcNAc...) asparagine glycosylation sites follow: Asn656, Asn722, Asn845, and Asn901. Residues Ile961–Ile981 form a helical membrane-spanning segment. Residues Phe982–Thr1378 lie on the Cytoplasmic side of the membrane. The tract at residues Ser1002 to Val1026 is disordered. Positions Asn1013–Asp1022 are enriched in basic and acidic residues. In terms of domain architecture, Protein kinase spans Ile1059–Val1322. ATP is bound by residues Ile1065–Val1073, Lys1091, and Leu1138–Met1141. Asp1185 functions as the Proton acceptor in the catalytic mechanism. Arg1189 is an ATP binding site. Tyr1215, Tyr1216, Tyr1330, and Tyr1337 each carry phosphotyrosine; by autocatalysis. Residues Asp1347–Thr1378 form a disordered region. A compositionally biased stretch (low complexity) spans Ser1349–Gln1360.

The protein belongs to the protein kinase superfamily. Tyr protein kinase family. In terms of assembly, heterodimer of an alpha chain and a beta chain which are disulfide linked. Binds PLXNB1. Associates with and is negatively regulated by HYAL2. Interacts when phosphorylated with downstream effectors including PIK3R1, PCLG1, GRB2 and GAB1. Interacts with integrin beta1/ITGB1 in a ligand-independent fashion. Isoform sf-Stk forms covalent heterodimers with friend spleen focus-forming virus (FSFFV) gp55. In terms of processing, proteolytic processing yields the two subunits. Post-translationally, autophosphorylated in response to ligand binding on Tyr-1215 and Tyr-1216 in the kinase domain leading to further phosphorylation of Tyr-1330 and Tyr-1337 in the C-terminal multifunctional docking site. Ubiquitinated. Ubiquitination by CBL regulates the receptor stability and activity through proteasomal degradation. In terms of processing, O-mannosylation of IPT/TIG domains on Thr or Ser residues by TMEM260 is required for protein maturation. O-mannosylated residues are composed of single mannose glycans that are not elongated or modified. In terms of tissue distribution, expressed in liver, skin, lung, brain, testis and kidney.

Its subcellular location is the membrane. It carries out the reaction L-tyrosyl-[protein] + ATP = O-phospho-L-tyrosyl-[protein] + ADP + H(+). With respect to regulation, in its inactive state, the C-terminal tail interacts with the catalytic domain and inhibits the kinase activity. Upon ligand binding, the C-terminal tail is displaced and becomes phosphorylated, thus increasing the kinase activity. Functionally, receptor tyrosine kinase that transduces signals from the extracellular matrix into the cytoplasm by binding to MST1 ligand. Regulates many physiological processes including cell survival, migration and differentiation. Ligand binding at the cell surface induces autophosphorylation of RON on its intracellular domain that provides docking sites for downstream signaling molecules. Following activation by ligand, interacts with the PI3-kinase subunit PIK3R1, PLCG1 or the adapter GAB1. Recruitment of these downstream effectors by RON leads to the activation of several signaling cascades including the RAS-ERK, PI3 kinase-AKT, or PLCgamma-PKC. RON signaling activates the wound healing response by promoting epithelial cell migration, proliferation as well as survival at the wound site. Also plays a role in the innate immune response by regulating the migration and phagocytic activity of macrophages. Alternatively, RON can also promote signals such as cell migration and proliferation in response to growth factors other than MST1 ligand. The polypeptide is Macrophage-stimulating protein receptor (Mst1r) (Mus musculus (Mouse)).